Here is a 187-residue protein sequence, read N- to C-terminus: Large ribosomal subunit protein uL5 (187 aa).

The protein belongs to the universal ribosomal protein uL5 family. As to quaternary structure, part of the 50S ribosomal subunit; part of the 5S rRNA/L5/L18/L25 subcomplex. Contacts the 5S rRNA and the P site tRNA. Forms a bridge to the 30S subunit in the 70S ribosome.

Functionally, this is one of the proteins that bind and probably mediate the attachment of the 5S RNA into the large ribosomal subunit, where it forms part of the central protuberance. In the 70S ribosome it contacts protein S13 of the 30S subunit (bridge B1b), connecting the 2 subunits; this bridge is implicated in subunit movement. Contacts the P site tRNA; the 5S rRNA and some of its associated proteins might help stabilize positioning of ribosome-bound tRNAs. The polypeptide is Large ribosomal subunit protein uL5 (Nocardia farcinica (strain IFM 10152)).